The following is a 246-amino-acid chain: Proteasome subunit alpha (246 aa).

The protein belongs to the peptidase T1A family. In terms of assembly, the 20S proteasome core is composed of 14 alpha and 14 beta subunits that assemble into four stacked heptameric rings, resulting in a barrel-shaped structure. The two inner rings, each composed of seven catalytic beta subunits, are sandwiched by two outer rings, each composed of seven alpha subunits. The catalytic chamber with the active sites is on the inside of the barrel. Has a gated structure, the ends of the cylinder being occluded by the N-termini of the alpha-subunits. Is capped by the proteasome-associated ATPase, ARC. Can also interact with the bacterial proteasome activator Bpa through the C-terminal hydrophobic-tyrosine-X motif (HbYX motif) of Bpa; Bpa forms a homooligomeric ring-like structure which stacks co-axially with the proteasomal alpha-rings. Pupylated at an undetermined lysine residue by the prokaryotic ubiquitin-like protein Pup with the help of the ligase PafA, which leads to its degradation by the proteasome and thereby constitutes a negative auto-regulation.

Its subcellular location is the cytoplasm. It functions in the pathway protein degradation; proteasomal Pup-dependent pathway. The formation of the proteasomal ATPase ARC-20S proteasome complex, likely via the docking of the C-termini of ARC into the intersubunit pockets in the alpha-rings, may trigger opening of the gate for substrate entry. Interconversion between the open-gate and close-gate conformations leads to a dynamic regulation of the 20S proteasome proteolysis activity. PPS auto-regulates its own activity via pupylation and degradation of its components. Peptidolytic activity is inhibited by N-acetyl-Leu-Leu-norleucinal (Ac-LLnL) in vitro. In terms of biological role, component of the proteasome core, a large protease complex with broad specificity involved in protein degradation. The M.smegmatis proteasome is able to cleave oligopeptides after hydrophobic residues, thus displaying chymotrypsin-like activity. In complex with the ATPase Mpa, degrades protein targets conjugated to a prokaryotic ubiquitin-like protein (Pup). Identified substrates of the M.smegmatis proteasome are the pupylated SodA and Ino1 proteins. The Pup-proteasome system (PPS) is essential for survival under starvation; PPS likely functions to recycle amino acids under nitrogen starvation, thereby enabling the cell to maintain basal metabolic activities. This chain is Proteasome subunit alpha, found in Mycolicibacterium smegmatis (strain ATCC 700084 / mc(2)155) (Mycobacterium smegmatis).